We begin with the raw amino-acid sequence, 651 residues long: Macrolide export ATP-binding/permease protein MacB (651 aa).

An ABC transporter domain is found at 2–239; that stretch reads IEIVNVTKTY…PQMPQGGMEA (238 aa). 38–45 lines the ATP pocket; that stretch reads GASGSGKS. A run of 4 helical transmembrane segments spans residues 269–289, 532–552, 589–609, and 614–634; these read FLSV…MALG, IAAI…LVSV, IIGI…AGWA, and MFSV…FGLW.

Belongs to the ABC transporter superfamily. Macrolide exporter (TC 3.A.1.122) family. As to quaternary structure, homodimer.

It is found in the cell inner membrane. In terms of biological role, non-canonical ABC transporter that contains transmembrane domains (TMD), which form a pore in the inner membrane, and an ATP-binding domain (NBD), which is responsible for energy generation. Confers resistance against macrolides. This Chlorobaculum tepidum (strain ATCC 49652 / DSM 12025 / NBRC 103806 / TLS) (Chlorobium tepidum) protein is Macrolide export ATP-binding/permease protein MacB.